Consider the following 139-residue polypeptide: Cellular retinoic acid-binding protein 2 (139 aa).

The short motif at 21–31 is the Nuclear localization signal element; it reads KALGVNMMMRK. Lys-103 is covalently cross-linked (Glycyl lysine isopeptide (Lys-Gly) (interchain with G-Cter in SUMO)). 134 to 136 is an all-trans-retinoate binding site; that stretch reads RVY.

The protein belongs to the calycin superfamily. Fatty-acid binding protein (FABP) family. As to quaternary structure, interacts with importin alpha, RXR and RARA. Post-translationally, sumoylated in response to retinoic acid binding, sumoylation is critical for dissociation from ER and subsequent nuclear translocation.

It is found in the cytoplasm. The protein resides in the endoplasmic reticulum. Its subcellular location is the nucleus. Its function is as follows. Transports retinoic acid to the nucleus. Regulates the access of retinoic acid to the nuclear retinoic acid receptors. This Rattus norvegicus (Rat) protein is Cellular retinoic acid-binding protein 2 (Crabp2).